A 480-amino-acid polypeptide reads, in one-letter code: Glutathione reductase (480 aa).

2 residues coordinate FAD: Ser-31 and Gly-32. Residue Ser-31 coordinates glutathione. Glutathione is bound at residue Arg-38. Residues Glu-51, Thr-58, Cys-59, and Lys-67 each contribute to the FAD site. A disulfide bridge connects residues Cys-59 and Cys-64. Tyr-121 provides a ligand contact to glutathione. Position 137 (Ala-137) interacts with FAD. Residues Ile-206, Glu-209, Arg-226, and Gly-291 each contribute to the NADP(+) site. Asp-331 lines the FAD pocket. Glu-337 lines the NADP(+) pocket. Thr-339 is a binding site for FAD. Residue Arg-347 participates in glutathione binding. Val-372 is an NADP(+) binding site. Glutathione is bound at residue Lys-422. His-469 serves as a coordination point for FAD. His-469 functions as the Proton acceptor in the catalytic mechanism.

Belongs to the class-I pyridine nucleotide-disulfide oxidoreductase family. As to quaternary structure, homodimer. It depends on FAD as a cofactor.

It localises to the cytoplasm. It is found in the mitochondrion. It carries out the reaction 2 glutathione + NADP(+) = glutathione disulfide + NADPH + H(+). In terms of biological role, catalyzes the reduction of glutathione disulfide (GSSG) to reduced glutathione (GSH). Constitutes the major mechanism to maintain a high GSH:GSSG ratio in the cytosol. This chain is Glutathione reductase (GLR1), found in Eremothecium gossypii (strain ATCC 10895 / CBS 109.51 / FGSC 9923 / NRRL Y-1056) (Yeast).